A 259-amino-acid chain; its full sequence is 12alpha-hydroxysteroid dehydrogenase (259 aa).

The active-site Proton acceptor is Tyr-162.

This sequence belongs to the short-chain dehydrogenases/reductases (SDR) family. Homotetramer.

It catalyses the reaction cholate + NADP(+) = 3alpha,7alpha-dihydroxy-12-oxo-5beta-cholanate + NADPH + H(+). It carries out the reaction deoxycholate + NADP(+) = 12-dehydrodeoxycholate + NADPH + H(+). Functionally, catalyzes the oxidation of the 12alpha-hydroxy group of bile acids, like cholate and deoxycholate. Is also able to catalyze the reverse reaction in vitro. Is likely involved in an epimerization pathway of bile acids that converts hydroxy groups from alpha to beta positions via stable oxo-intermediates, which occurs in the human gut. The protein is 12alpha-hydroxysteroid dehydrogenase of Clostridium sp. (strain ATCC 29733 / VPI C48-50).